The chain runs to 214 residues: Adenylate kinase (214 aa).

Residue 10 to 15 coordinates ATP; it reads GAGKGT. The interval 30-59 is NMP; it reads STGDMFRDHKARGTEIGKQVQAIMDGGGLV. AMP is bound by residues T31, R36, 57-59, 85-88, and Q92; these read GLV and GYPR. Residues 126–163 are LID; it reads GRRSCPRCGAVYHVSQNPPRRAGYCDRDDAELVQREDD. Position 127 (R127) interacts with ATP. Residues C130 and C133 each contribute to the Zn(2+) site. 136 to 137 lines the ATP pocket; sequence VY. Residues C150 and D153 each coordinate Zn(2+). Residues R160 and R171 each contribute to the AMP site. Position 199 (G199) interacts with ATP.

The protein belongs to the adenylate kinase family. As to quaternary structure, monomer.

It localises to the cytoplasm. The enzyme catalyses AMP + ATP = 2 ADP. It participates in purine metabolism; AMP biosynthesis via salvage pathway; AMP from ADP: step 1/1. Its function is as follows. Catalyzes the reversible transfer of the terminal phosphate group between ATP and AMP. Plays an important role in cellular energy homeostasis and in adenine nucleotide metabolism. The polypeptide is Adenylate kinase (Anaeromyxobacter dehalogenans (strain 2CP-C)).